We begin with the raw amino-acid sequence, 227 residues long: Uracil-DNA glycosylase (227 aa).

Asp-68 serves as the catalytic Proton acceptor.

The protein belongs to the uracil-DNA glycosylase (UDG) superfamily. UNG family.

The protein resides in the cytoplasm. The catalysed reaction is Hydrolyzes single-stranded DNA or mismatched double-stranded DNA and polynucleotides, releasing free uracil.. Its function is as follows. Excises uracil residues from the DNA which can arise as a result of misincorporation of dUMP residues by DNA polymerase or due to deamination of cytosine. The sequence is that of Uracil-DNA glycosylase from Mycobacterium avium (strain 104).